The following is a 222-amino-acid chain: 2-C-methyl-D-erythritol 2,4-cyclodiphosphate synthase, chloroplastic (222 aa).

The N-terminal 43 residues, 1–43 (MATASSLFLASPVATAPTARARSTPSASPARPSLRLRRPSTLA), are a transit peptide targeting the chloroplast. Residues aspartate 73 and histidine 75 each coordinate a divalent metal cation. Substrate contacts are provided by residues 73-75 (DLH), 99-100 (HS), 103-111 (DVLLHCVVD), 121-123 (DIG), 126-130 (FPDSD), aspartate 130, 165-171 (LQKPKIS), and 196-200 (AKTHE). Histidine 107 contributes to the a divalent metal cation binding site.

Belongs to the IspF family. Homotrimer. A divalent metal cation is required as a cofactor. In terms of tissue distribution, expressed in roots, leaves, stems, leaf sheaths and young panicles.

Its subcellular location is the plastid. It localises to the chloroplast. The enzyme catalyses 4-CDP-2-C-methyl-D-erythritol 2-phosphate = 2-C-methyl-D-erythritol 2,4-cyclic diphosphate + CMP. The protein operates within isoprenoid biosynthesis; isopentenyl diphosphate biosynthesis via DXP pathway; isopentenyl diphosphate from 1-deoxy-D-xylulose 5-phosphate: step 4/6. Enzyme of the plastid non-mevalonate pathway for isoprenoid biosynthesis that converts 4-diphosphocytidyl-2C-methyl-D-erythritol 2-phosphate into 2C-methyl-D-erythritol 2,4-cyclodiphosphate and CMP. Is essential for chloroplast development. This Oryza sativa subsp. japonica (Rice) protein is 2-C-methyl-D-erythritol 2,4-cyclodiphosphate synthase, chloroplastic.